A 187-amino-acid chain; its full sequence is UPF0340 protein stu1894 (187 aa).

It belongs to the UPF0340 family.

The protein is UPF0340 protein stu1894 of Streptococcus thermophilus (strain ATCC BAA-250 / LMG 18311).